The chain runs to 727 residues: NADH-ubiquinone oxidoreductase 75 kDa subunit, mitochondrial (727 aa).

The N-terminal 23 residues, 1–23, are a transit peptide targeting the mitochondrion; that stretch reads MLRIPVRKALVGLSKSPKGCVRT. The 2Fe-2S ferredoxin-type domain occupies 30–108; sequence NLIEVFVDGQ…GWNILTNSEK (79 aa). [2Fe-2S] cluster-binding residues include Cys64, Cys75, and Cys78. Lys84 carries the N6-acetyllysine modification. Cys92 lines the [2Fe-2S] cluster pocket. The 4Fe-4S His(Cys)3-ligated-type domain maps to 108-147; sequence KSKKAREGVMEFLLANHPLDCPICDQGGECDLQDQSMMFG. His124, Cys128, Cys131, Cys137, Cys176, Cys179, Cys182, and Cys226 together coordinate [4Fe-4S] cluster. A 4Fe-4S Mo/W bis-MGD-type domain is found at 245-301; the sequence is TRKTESIDVMDAVGSNIVVSTRTGEVMRILPRMHEDINEXWISDKTRFAYDGLKRQR. 3 positions are modified to N6-acetyllysine: Lys467, Lys499, and Lys709.

It belongs to the complex I 75 kDa subunit family. As to quaternary structure, core subunit of respiratory chain NADH dehydrogenase (Complex I) which is composed of 45 different subunits. This is the largest subunit of complex I and it is a component of the iron-sulfur (IP) fragment of the enzyme. Complex I associates with ubiquinol-cytochrome reductase complex (Complex III) to form supercomplexes. Interacts with MDM2 and AKAP1. Requires [2Fe-2S] cluster as cofactor. [4Fe-4S] cluster is required as a cofactor.

The protein localises to the mitochondrion inner membrane. It carries out the reaction a ubiquinone + NADH + 5 H(+)(in) = a ubiquinol + NAD(+) + 4 H(+)(out). Functionally, core subunit of the mitochondrial membrane respiratory chain NADH dehydrogenase (Complex I) which catalyzes electron transfer from NADH through the respiratory chain, using ubiquinone as an electron acceptor. Essential for catalysing the entry and efficient transfer of electrons within complex I. Plays a key role in the assembly and stability of complex I and participates in the association of complex I with ubiquinol-cytochrome reductase complex (Complex III) to form supercomplexes. This Gorilla gorilla gorilla (Western lowland gorilla) protein is NADH-ubiquinone oxidoreductase 75 kDa subunit, mitochondrial (NDUFS1).